The chain runs to 398 residues: Dual specificity mitogen-activated protein kinase kinase 2 (398 aa).

A disordered region spans residues 1 to 29 (MPAKRKPVLPALTITPSPAEGPGPGGSAE). A Protein kinase domain is found at 70–367 (FERISELGAG…LKMLMNHTFI (298 aa)). ATP-binding positions include 76 to 84 (LGAGNGGVV) and K99. The active-site Proton acceptor is the D192. Phosphoserine; by RAF is present on residues S220 and S224.

This sequence belongs to the protein kinase superfamily. STE Ser/Thr protein kinase family. MAP kinase kinase subfamily. Activated by phosphorylation on Ser/Thr catalyzed by MAP kinase kinase kinases (RAF).

The enzyme catalyses L-seryl-[protein] + ATP = O-phospho-L-seryl-[protein] + ADP + H(+). It catalyses the reaction L-threonyl-[protein] + ATP = O-phospho-L-threonyl-[protein] + ADP + H(+). The catalysed reaction is L-tyrosyl-[protein] + ATP = O-phospho-L-tyrosyl-[protein] + ADP + H(+). Catalyzes the concomitant phosphorylation of a threonine and a tyrosine residue in a Thr-Glu-Tyr sequence located in MAP kinases. Activates the ERK1 and ERK2 MAP kinases. This is Dual specificity mitogen-activated protein kinase kinase 2 (MAP2K2) from Gallus gallus (Chicken).